The chain runs to 156 residues: Small ribosomal subunit protein uS7 (156 aa).

It belongs to the universal ribosomal protein uS7 family. As to quaternary structure, part of the 30S ribosomal subunit. Contacts proteins S9 and S11.

In terms of biological role, one of the primary rRNA binding proteins, it binds directly to 16S rRNA where it nucleates assembly of the head domain of the 30S subunit. Is located at the subunit interface close to the decoding center, probably blocks exit of the E-site tRNA. The protein is Small ribosomal subunit protein uS7 of Buchnera aphidicola subsp. Cinara cedri (strain Cc).